A 1175-amino-acid polypeptide reads, in one-letter code: DNA-directed RNA polymerase subunit beta (1175 aa).

The tract at residues 1142-1175 (PMELSGSDDDEFDQAGASLGINLSRDERSDADIA) is disordered. The span at 1165–1175 (SRDERSDADIA) shows a compositional bias: basic and acidic residues.

This sequence belongs to the RNA polymerase beta chain family. As to quaternary structure, the RNAP catalytic core consists of 2 alpha, 1 beta, 1 beta' and 1 omega subunit. When a sigma factor is associated with the core the holoenzyme is formed, which can initiate transcription.

It catalyses the reaction RNA(n) + a ribonucleoside 5'-triphosphate = RNA(n+1) + diphosphate. Functionally, DNA-dependent RNA polymerase catalyzes the transcription of DNA into RNA using the four ribonucleoside triphosphates as substrates. This chain is DNA-directed RNA polymerase subunit beta, found in Corynebacterium diphtheriae (strain ATCC 700971 / NCTC 13129 / Biotype gravis).